The primary structure comprises 370 residues: Putative agmatine deiminase (370 aa).

Cysteine 361 serves as the catalytic Amidino-cysteine intermediate.

The protein belongs to the agmatine deiminase family.

The enzyme catalyses agmatine + H2O = N-carbamoylputrescine + NH4(+). In Shewanella baltica (strain OS223), this protein is Putative agmatine deiminase.